The following is a 929-amino-acid chain: von Willebrand factor C and EGF domain-containing protein (929 aa).

The signal sequence occupies residues 1 to 21; that stretch reads MWARLLLHVAYILIPLLGSSA. Residues 70–98 enclose the EGF-like 1 domain; sequence LCSFGCGSGICIAPNVCSCQDGEQGATCP. Positions 142–180 constitute an EGF-like 2; calcium-binding domain; the sequence is DIDECLSSSCEGHCVNTEGGFVCECGPGMQLSADRHSCQ. Intrachain disulfides connect Cys146/Cys155, Cys151/Cys164, Cys166/Cys179, Cys185/Cys194, Cys190/Cys203, Cys205/Cys218, Cys224/Cys237, Cys233/Cys246, and Cys248/Cys261. The EGF-like 3; calcium-binding domain maps to 181–219; sequence DTDECLGTPCQQRCKNSIGSYKCSCRAGFHLHGNRHSCI. The region spanning 220–262 is the EGF-like 4; calcium-binding domain; the sequence is DVNECRRPQERRVCHHTCHNTVGSFLCTCRPGFRLRSDRVSCE. Disordered regions lie at residues 291-317 and 339-374; these read AGRP…RTIS and PSSS…LGAG. Residues 339 to 353 are compositionally biased toward low complexity; sequence PSSSPLGTLGPPSLL. VWFC domains are found at residues 376–433, 433–494, 491–552, 558–618, 619–677, and 677–762; these read SSCW…PSCT, TGCF…GRCY, GRCY…FTCR, TGCS…PDCS, AGCT…PVCH, and HDCN…VNCS. N-linked (GlcNAc...) asparagine glycans are attached at residues Asn454 and Asn464. The segment at 731–774 is disordered; that stretch reads PLEEKQQPSPHGELAKAARNARGDTEVPVNCSSCPGPPSASPTR. A compositionally biased stretch (basic and acidic residues) spans 743 to 755; sequence ELAKAARNARGDT. The N-linked (GlcNAc...) asparagine glycan is linked to Asn787. The segment covering 791–807 has biased composition (polar residues); the sequence is IQSASPSPPIAQTSSSP. Disordered stretches follow at residues 791–861 and 879–929; these read IQSA…SSTF and AETP…NSTI. The span at 889–903 shows a compositional bias: low complexity; it reads LSETLTTSSSSQRLS.

It localises to the secreted. Its function is as follows. May be a regulatory element in the beta-catenin signaling pathway and a target for chemoprevention of hapatocellular carcinoma. The chain is von Willebrand factor C and EGF domain-containing protein (Vwce) from Mus musculus (Mouse).